The sequence spans 117 residues: Probable non-functional immunoglobulin heavy variable 3-16 (117 aa).

Positions 1-19 (MEFGLSWVFLAGILKGVQC) are cleaved as a signal peptide. Residues 20-44 (EVQLVESGGGLVQPGGSLRLSCAAS) are framework-1. Positions 21–117 (VQLVESGGGL…EDMAVYYCVR (97 aa)) constitute an Ig-like domain. A disulfide bridge connects residues cysteine 41 and cysteine 115. A complementarity-determining-1 region spans residues 45-52 (GFTFSNSD). Residues 53–69 (MNWARKAPGKGLEWVSG) form a framework-2 region. A complementarity-determining-2 region spans residues 70-77 (VSWNGSRT). Asparagine 73 is a glycosylation site (N-linked (GlcNAc...) asparagine). Residues 78–115 (HYVDSVKRRFIISRDNSRNSLYLQKNRRRAEDMAVYYC) are framework-3. A complementarity-determining-3 region spans residues 116–117 (VR).

Immunoglobulins are composed of two identical heavy chains and two identical light chains; disulfide-linked.

The protein localises to the secreted. Its subcellular location is the cell membrane. Probable non-functional open reading frame (ORF) of V region of the variable domain of immunoglobulin heavy chains. Non-functional ORF generally cannot participate in the synthesis of a productive immunoglobulin chain due to altered V-(D)-J or switch recombination and/or splicing site (at mRNA level) and/or conserved amino acid change (protein level). Immunoglobulins, also known as antibodies, are membrane-bound or secreted glycoproteins produced by B lymphocytes. In the recognition phase of humoral immunity, the membrane-bound immunoglobulins serve as receptors which, upon binding of a specific antigen, trigger the clonal expansion and differentiation of B lymphocytes into immunoglobulins-secreting plasma cells. Secreted immunoglobulins mediate the effector phase of humoral immunity, which results in the elimination of bound antigens. The antigen binding site is formed by the variable domain of one heavy chain, together with that of its associated light chain. Thus, each immunoglobulin has two antigen binding sites with remarkable affinity for a particular antigen. The variable domains are assembled by a process called V-(D)-J rearrangement and can then be subjected to somatic hypermutations which, after exposure to antigen and selection, allow affinity maturation for a particular antigen. The chain is Probable non-functional immunoglobulin heavy variable 3-16 from Homo sapiens (Human).